The sequence spans 310 residues: Probable manganese-dependent inorganic pyrophosphatase (310 aa).

Residues H10, D14, D16, D75, H97, and D149 each coordinate Mn(2+).

This sequence belongs to the PPase class C family. Mn(2+) serves as cofactor.

Its subcellular location is the cytoplasm. It carries out the reaction diphosphate + H2O = 2 phosphate + H(+). The protein is Probable manganese-dependent inorganic pyrophosphatase of Clostridium acetobutylicum (strain ATCC 824 / DSM 792 / JCM 1419 / IAM 19013 / LMG 5710 / NBRC 13948 / NRRL B-527 / VKM B-1787 / 2291 / W).